We begin with the raw amino-acid sequence, 126 residues long: Large ribosomal subunit protein bL19 (126 aa).

Belongs to the bacterial ribosomal protein bL19 family.

This protein is located at the 30S-50S ribosomal subunit interface and may play a role in the structure and function of the aminoacyl-tRNA binding site. The chain is Large ribosomal subunit protein bL19 from Bordetella petrii (strain ATCC BAA-461 / DSM 12804 / CCUG 43448).